A 209-amino-acid chain; its full sequence is Large ribosomal subunit protein bL25 (209 aa).

This sequence belongs to the bacterial ribosomal protein bL25 family. CTC subfamily. Part of the 50S ribosomal subunit; part of the 5S rRNA/L5/L18/L25 subcomplex. Contacts the 5S rRNA. Binds to the 5S rRNA independently of L5 and L18.

In terms of biological role, this is one of the proteins that binds to the 5S RNA in the ribosome where it forms part of the central protuberance. This Xanthomonas campestris pv. campestris (strain B100) protein is Large ribosomal subunit protein bL25.